The chain runs to 364 residues: UDP-N-acetylglucosamine--N-acetylmuramyl-(pentapeptide) pyrophosphoryl-undecaprenol N-acetylglucosamine transferase (364 aa).

UDP-N-acetyl-alpha-D-glucosamine contacts are provided by residues Thr14–Gly16, Asn126, Arg163, Ser190, Ile246, Ala265–Glu270, and Gln291.

It belongs to the glycosyltransferase 28 family. MurG subfamily.

The protein resides in the cell inner membrane. It carries out the reaction di-trans,octa-cis-undecaprenyl diphospho-N-acetyl-alpha-D-muramoyl-L-alanyl-D-glutamyl-meso-2,6-diaminopimeloyl-D-alanyl-D-alanine + UDP-N-acetyl-alpha-D-glucosamine = di-trans,octa-cis-undecaprenyl diphospho-[N-acetyl-alpha-D-glucosaminyl-(1-&gt;4)]-N-acetyl-alpha-D-muramoyl-L-alanyl-D-glutamyl-meso-2,6-diaminopimeloyl-D-alanyl-D-alanine + UDP + H(+). It participates in cell wall biogenesis; peptidoglycan biosynthesis. Functionally, cell wall formation. Catalyzes the transfer of a GlcNAc subunit on undecaprenyl-pyrophosphoryl-MurNAc-pentapeptide (lipid intermediate I) to form undecaprenyl-pyrophosphoryl-MurNAc-(pentapeptide)GlcNAc (lipid intermediate II). The protein is UDP-N-acetylglucosamine--N-acetylmuramyl-(pentapeptide) pyrophosphoryl-undecaprenol N-acetylglucosamine transferase of Shewanella loihica (strain ATCC BAA-1088 / PV-4).